Consider the following 96-residue polypeptide: RNA-binding protein Hfq (96 aa).

The region spanning 9 to 68 (DPFLNALRRERVPVSIYLVNGIKLQGQIESFDQFVILLKNTVSQMVYKHAISTVVPSRPV) is the Sm domain. The disordered stretch occupies residues 64 to 96 (PSRPVSHHSNTGTNQAGTNYSGGNATQQDDVAE). The segment covering 70 to 96 (HHSNTGTNQAGTNYSGGNATQQDDVAE) has biased composition (polar residues).

The protein belongs to the Hfq family. Homohexamer.

Functionally, RNA chaperone that binds small regulatory RNA (sRNAs) and mRNAs to facilitate mRNA translational regulation in response to envelope stress, environmental stress and changes in metabolite concentrations. Also binds with high specificity to tRNAs. This Proteus mirabilis (strain HI4320) protein is RNA-binding protein Hfq.